Reading from the N-terminus, the 238-residue chain is Probable septum site-determining protein MinC (238 aa).

This sequence belongs to the MinC family. As to quaternary structure, interacts with MinD and FtsZ.

Its function is as follows. Cell division inhibitor that blocks the formation of polar Z ring septums. Rapidly oscillates between the poles of the cell to destabilize FtsZ filaments that have formed before they mature into polar Z rings. Prevents FtsZ polymerization. In Aeromonas salmonicida (strain A449), this protein is Probable septum site-determining protein MinC.